Reading from the N-terminus, the 317-residue chain is Fe-S cluster assembly protein DRE2 (317 aa).

The segment at 1-131 is N-terminal SAM-like domain; that stretch reads MERMLFLSPP…KPNFGAQDTV (131 aa). The segment at 132–209 is linker; sequence PLKLGKKKKA…EEALMDEEDM (78 aa). [2Fe-2S] cluster contacts are provided by Cys219, Cys230, Cys233, and Cys235. The tract at residues 219-235 is fe-S binding site A; that stretch reads CRPKAGKRRRACKDCTC. Cys280, Cys283, Cys291, and Cys294 together coordinate [4Fe-4S] cluster. 2 short sequence motifs (cx2C motif) span residues 280 to 283 and 291 to 294; these read CGNC and CDGC. The fe-S binding site B stretch occupies residues 280–294; sequence CGNCALGDAFRCDGC.

The protein belongs to the anamorsin family. Monomer. Interacts with TAH18. Interacts with MIA40. [2Fe-2S] cluster is required as a cofactor. Requires [4Fe-4S] cluster as cofactor.

The protein resides in the cytoplasm. It localises to the mitochondrion intermembrane space. In terms of biological role, component of the cytosolic iron-sulfur (Fe-S) protein assembly (CIA) machinery required for the maturation of extramitochondrial Fe-S proteins. Part of an electron transfer chain functioning in an early step of cytosolic Fe-S biogenesis, facilitating the de novo assembly of a [4Fe-4S] cluster on the scaffold complex CFD1-NBP35. Electrons are transferred to DRE2 from NADPH via the FAD- and FMN-containing protein TAH18. TAH18-DRE2 are also required for the assembly of the diferric tyrosyl radical cofactor of ribonucleotide reductase (RNR), probably by providing electrons for reduction during radical cofactor maturation in the catalytic small subunit RNR2. The sequence is that of Fe-S cluster assembly protein DRE2 from Uncinocarpus reesii (strain UAMH 1704).